Consider the following 379-residue polypeptide: Homoserine O-succinyltransferase (379 aa).

Residues 51-360 (NAVLICHALS…DAPQGHDAFL (310 aa)) enclose the AB hydrolase-1 domain. Ser-157 (nucleophile) is an active-site residue. Arg-227 contacts substrate. Catalysis depends on residues Asp-323 and His-356. Asp-357 contacts substrate.

This sequence belongs to the AB hydrolase superfamily. MetX family. As to quaternary structure, homodimer.

The protein localises to the cytoplasm. The catalysed reaction is L-homoserine + succinyl-CoA = O-succinyl-L-homoserine + CoA. The protein operates within amino-acid biosynthesis; L-methionine biosynthesis via de novo pathway; O-succinyl-L-homoserine from L-homoserine: step 1/1. In terms of biological role, transfers a succinyl group from succinyl-CoA to L-homoserine, forming succinyl-L-homoserine. The chain is Homoserine O-succinyltransferase from Stutzerimonas stutzeri (strain A1501) (Pseudomonas stutzeri).